We begin with the raw amino-acid sequence, 251 residues long: Endoglucanase CX (251 aa).

This sequence belongs to the glycosyl hydrolase 9 (cellulase E) family.

It catalyses the reaction Endohydrolysis of (1-&gt;4)-beta-D-glucosidic linkages in cellulose, lichenin and cereal beta-D-glucans.. Degrades carboxymethylcellulose (CMC). This chain is Endoglucanase CX, found in Prunus persica (Peach).